Consider the following 883-residue polypeptide: Aldehyde-alcohol dehydrogenase (883 aa).

The tract at residues 13 to 456 (KLVAEKHVDE…DNVSAINLLN (444 aa)) is aldehyde dehydrogenase. Residues 121-126 (ITPTTN), Gly206, and Gly224 each bind NAD(+). Catalysis depends on Cys257, which acts as the Nucleophile. Residues Glu355, Leu435, and 438-443 (GSYGRN) each bind NAD(+). Residues 457-464 (IKKVGRRR) are linker. Residues Asp500, Asp534, 561–565 (GSPMD), 612–613 (TT), Val625, Lys634, and Leu653 each bind NAD(+). Fe cation-binding residues include Asp668, His672, His736, and His750.

It in the N-terminal section; belongs to the aldehyde dehydrogenase family. This sequence in the C-terminal section; belongs to the iron-containing alcohol dehydrogenase family. It depends on Fe(2+) as a cofactor.

The catalysed reaction is ethanol + NAD(+) = acetaldehyde + NADH + H(+). It carries out the reaction an aldehyde + NAD(+) + H2O = a carboxylate + NADH + 2 H(+). Functionally, has alcohol dehydrogenase activity. Has aldehyde dehydrogenase activity. May play a role in enhancing virulence in mice. May be considered a potential virulence factor. The chain is Aldehyde-alcohol dehydrogenase from Streptococcus pneumoniae serotype 4 (strain ATCC BAA-334 / TIGR4).